The sequence spans 288 residues: Proteasome subunit beta (288 aa).

Positions 1-57 (MTVDGQVGRWPVSAIPAAYMRPGSGSFTEFLAGAEPHLLPGRAGAQPAGAAPAVPHG) are cleaved as a propeptide — removed in mature form; by autocatalysis. The active-site Nucleophile is the Thr-58.

It belongs to the peptidase T1B family. The 20S proteasome core is composed of 14 alpha and 14 beta subunits that assemble into four stacked heptameric rings, resulting in a barrel-shaped structure. The two inner rings, each composed of seven catalytic beta subunits, are sandwiched by two outer rings, each composed of seven alpha subunits. The catalytic chamber with the active sites is on the inside of the barrel. Has a gated structure, the ends of the cylinder being occluded by the N-termini of the alpha-subunits. Is capped by the proteasome-associated ATPase, ARC.

Its subcellular location is the cytoplasm. It carries out the reaction Cleavage of peptide bonds with very broad specificity.. It functions in the pathway protein degradation; proteasomal Pup-dependent pathway. The formation of the proteasomal ATPase ARC-20S proteasome complex, likely via the docking of the C-termini of ARC into the intersubunit pockets in the alpha-rings, may trigger opening of the gate for substrate entry. Interconversion between the open-gate and close-gate conformations leads to a dynamic regulation of the 20S proteasome proteolysis activity. Its function is as follows. Component of the proteasome core, a large protease complex with broad specificity involved in protein degradation. The chain is Proteasome subunit beta from Nakamurella multipartita (strain ATCC 700099 / DSM 44233 / CIP 104796 / JCM 9543 / NBRC 105858 / Y-104) (Microsphaera multipartita).